A 298-amino-acid polypeptide reads, in one-letter code: N-acetylmuramic acid 6-phosphate etherase (298 aa).

The region spanning 55 to 218 (IHAQVSGGGR…STGLMIKSGK (164 aa)) is the SIS domain. Residue Glu83 is the Proton donor of the active site. Residue Glu114 is part of the active site.

Belongs to the GCKR-like family. MurNAc-6-P etherase subfamily. As to quaternary structure, homodimer.

It carries out the reaction N-acetyl-D-muramate 6-phosphate + H2O = N-acetyl-D-glucosamine 6-phosphate + (R)-lactate. Its pathway is amino-sugar metabolism; 1,6-anhydro-N-acetylmuramate degradation. It participates in amino-sugar metabolism; N-acetylmuramate degradation. The protein operates within cell wall biogenesis; peptidoglycan recycling. Specifically catalyzes the cleavage of the D-lactyl ether substituent of MurNAc 6-phosphate, producing GlcNAc 6-phosphate and D-lactate. Together with AnmK, is also required for the utilization of anhydro-N-acetylmuramic acid (anhMurNAc) either imported from the medium or derived from its own cell wall murein, and thus plays a role in cell wall recycling. This is N-acetylmuramic acid 6-phosphate etherase from Escherichia coli O81 (strain ED1a).